Consider the following 194-residue polypeptide: dCTP deaminase (194 aa).

DCTP is bound by residues 110–115 (RSSLAR), Asp-128, 136–138 (VLE), Tyr-171, Lys-178, and Gln-182. Glu-138 (proton donor/acceptor) is an active-site residue. A disordered region spans residues 171–194 (YNKRKNAKYKDQQEAVASRISQDS).

The protein belongs to the dCTP deaminase family. Homotrimer.

The catalysed reaction is dCTP + H2O + H(+) = dUTP + NH4(+). The protein operates within pyrimidine metabolism; dUMP biosynthesis; dUMP from dCTP (dUTP route): step 1/2. Functionally, catalyzes the deamination of dCTP to dUTP. The sequence is that of dCTP deaminase from Shewanella amazonensis (strain ATCC BAA-1098 / SB2B).